Reading from the N-terminus, the 464-residue chain is Argininosuccinate lyase (464 aa).

This sequence belongs to the lyase 1 family. Argininosuccinate lyase subfamily.

The protein localises to the cytoplasm. It catalyses the reaction 2-(N(omega)-L-arginino)succinate = fumarate + L-arginine. Its pathway is amino-acid biosynthesis; L-arginine biosynthesis; L-arginine from L-ornithine and carbamoyl phosphate: step 3/3. The protein is Argininosuccinate lyase of Pseudomonas aeruginosa (strain LESB58).